We begin with the raw amino-acid sequence, 363 residues long: Flagellar P-ring protein (363 aa).

The signal sequence occupies residues 1–21 (MKTVINIFILFTFLASLSANA).

This sequence belongs to the FlgI family. As to quaternary structure, the basal body constitutes a major portion of the flagellar organelle and consists of four rings (L,P,S, and M) mounted on a central rod.

It localises to the periplasm. The protein resides in the bacterial flagellum basal body. In terms of biological role, assembles around the rod to form the L-ring and probably protects the motor/basal body from shearing forces during rotation. The chain is Flagellar P-ring protein from Colwellia psychrerythraea (strain 34H / ATCC BAA-681) (Vibrio psychroerythus).